The sequence spans 486 residues: Homoserine O-acetyltransferase (486 aa).

In terms of domain architecture, AB hydrolase-1 spans 66–436 (NVLVICHALT…PEGHDAFLLE (371 aa)). Ser162 serves as the catalytic Nucleophile. Residues 248–281 (KFSRRSPSIAQQQKAQREETRKPSTVSEHSLQIH) are disordered. Polar residues-rich tracts occupy residues 250–261 (SRRSPSIAQQQK) and 270–280 (PSTVSEHSLQI). Catalysis depends on residues Asp401 and His430.

It belongs to the AB hydrolase superfamily. MetX family.

The protein localises to the cytoplasm. It catalyses the reaction L-homoserine + acetyl-CoA = O-acetyl-L-homoserine + CoA. It functions in the pathway amino-acid biosynthesis; L-methionine biosynthesis via de novo pathway; O-acetyl-L-homoserine from L-homoserine: step 1/1. Functionally, commits homoserine to the methionine biosynthesis pathway by catalyzing its O-acetylation. In Saccharomyces cerevisiae (strain ATCC 204508 / S288c) (Baker's yeast), this protein is Homoserine O-acetyltransferase (MET2).